Reading from the N-terminus, the 161-residue chain is Cytochrome c-type biogenesis protein CcmE (161 aa).

Residues 1-8 (MNPVRKKR) lie on the Cytoplasmic side of the membrane. A helical; Signal-anchor for type II membrane protein membrane pass occupies residues 9–29 (LYIVLAILCGVSIAVALALTA). Topologically, residues 30–161 (LQENINLFYT…AKGYQQESAQ (132 aa)) are periplasmic. The heme site is built by His124 and Tyr128.

The protein belongs to the CcmE/CycJ family.

It localises to the cell inner membrane. Its function is as follows. Heme chaperone required for the biogenesis of c-type cytochromes. Transiently binds heme delivered by CcmC and transfers the heme to apo-cytochromes in a process facilitated by CcmF and CcmH. The polypeptide is Cytochrome c-type biogenesis protein CcmE (Ectopseudomonas mendocina (strain ymp) (Pseudomonas mendocina)).